The primary structure comprises 247 residues: ABC-type transporter ATP-binding protein EcsA (247 aa).

Residues leucine 4–aspartate 234 form the ABC transporter domain. Glycine 36 to serine 43 contacts ATP.

It belongs to the ABC transporter superfamily.

In terms of biological role, has a role in exoprotein production, sporulation and competence. This Bacillus subtilis (strain 168) protein is ABC-type transporter ATP-binding protein EcsA (ecsA).